The primary structure comprises 182 residues: Lipoprotein signal peptidase (182 aa).

A run of 3 helical transmembrane segments spans residues 12–32 (VAVF…TKAW), 68–88 (ATWV…VAGV), and 91–111 (ISMK…GNLI). Catalysis depends on residues Asp127 and Asp140. Residues 135–155 (VGNVADIYLVVAGVVLVILIL) form a helical membrane-spanning segment.

Belongs to the peptidase A8 family.

The protein localises to the cell membrane. The catalysed reaction is Release of signal peptides from bacterial membrane prolipoproteins. Hydrolyzes -Xaa-Yaa-Zaa-|-(S,diacylglyceryl)Cys-, in which Xaa is hydrophobic (preferably Leu), and Yaa (Ala or Ser) and Zaa (Gly or Ala) have small, neutral side chains.. It functions in the pathway protein modification; lipoprotein biosynthesis (signal peptide cleavage). This protein specifically catalyzes the removal of signal peptides from prolipoproteins. The protein is Lipoprotein signal peptidase of Bifidobacterium longum subsp. infantis (strain ATCC 15697 / DSM 20088 / JCM 1222 / NCTC 11817 / S12).